We begin with the raw amino-acid sequence, 516 residues long: Endo-acting ulvan lyase (516 aa).

An N-terminal signal peptide occupies residues 1–24 (MLEKTTLKNIILIHFLMFLAVVTA). Residues cysteine 38 and cysteine 65 are joined by a disulfide bond. Residues glycine 42, asparagine 44, aspartate 62, serine 64, alanine 67, and asparagine 68 each coordinate Ca(2+). Tyrosine 138 contributes to the substrate binding site. Catalysis depends on lysine 143, which acts as the Proton acceptor. Residues 191–195 (EGDGR) and 260–263 (YRVK) each bind substrate. Tyrosine 260 functions as the Proton donor/acceptor in the catalytic mechanism. Residues 289–429 (PIGDVYKLKN…VWKAIAVESL (141 aa)) form a ulvan-binding domain region. Positions 430 to 516 (SVDENAILAS…NKYHKKLIVK (87 aa)) are cleaved as a propeptide — removed by the type IX secretion system (T9SS).

Belongs to the polysaccharide lyase 28 family. Requires Ca(2+) as cofactor.

It localises to the secreted. Its function is as follows. Ulvan lyase involved in ulvan degradation. Ulvan is the main polysaccharide component of the Ulvales (green seaweed) cell wall. It is composed of disaccharide building blocks comprising 3-sulfated rhamnose (Rha3S) linked to D-glucuronic acid (GlcA), L-iduronic acid (IduA), or D-xylose (Xyl). Ulvan lyase catalyzes the endolytic cleavage of the glycosidic bond between Rha3S and the uronic acids GlcA or IduA, producing oligosaccharides that have unsaturated 4-deoxy-L-threo-hex-4-enopyranosiduronic acid (deltaUA) at the non-reducing end. This results eventually in the degradation of the ulvan polysaccharide into deltaUA-Rha3S disaccharides and deltaUA-Rha3S-Xyl-Rha3S tetrasaccharides. This Formosa agariphila (strain DSM 15362 / KCTC 12365 / LMG 23005 / KMM 3901 / M-2Alg 35-1) protein is Endo-acting ulvan lyase.